The following is a 313-amino-acid chain: Malate dehydrogenase (313 aa).

NAD(+) is bound by residues 11 to 16 (GAGNIG) and D35. 2 residues coordinate substrate: R84 and R90. NAD(+) contacts are provided by residues N97 and 120–122 (VTN). Residues N122 and R153 each coordinate substrate. The Proton acceptor role is filled by H177.

Belongs to the LDH/MDH superfamily. MDH type 3 family.

The catalysed reaction is (S)-malate + NAD(+) = oxaloacetate + NADH + H(+). Its function is as follows. Catalyzes the reversible oxidation of malate to oxaloacetate. This is Malate dehydrogenase from Ehrlichia canis (strain Jake).